The chain runs to 225 residues: 2-C-methyl-D-erythritol 4-phosphate cytidylyltransferase (225 aa).

It belongs to the IspD/TarI cytidylyltransferase family. IspD subfamily.

The catalysed reaction is 2-C-methyl-D-erythritol 4-phosphate + CTP + H(+) = 4-CDP-2-C-methyl-D-erythritol + diphosphate. Its pathway is isoprenoid biosynthesis; isopentenyl diphosphate biosynthesis via DXP pathway; isopentenyl diphosphate from 1-deoxy-D-xylulose 5-phosphate: step 2/6. In terms of biological role, catalyzes the formation of 4-diphosphocytidyl-2-C-methyl-D-erythritol from CTP and 2-C-methyl-D-erythritol 4-phosphate (MEP). The sequence is that of 2-C-methyl-D-erythritol 4-phosphate cytidylyltransferase from Cereibacter sphaeroides (strain ATCC 17023 / DSM 158 / JCM 6121 / CCUG 31486 / LMG 2827 / NBRC 12203 / NCIMB 8253 / ATH 2.4.1.) (Rhodobacter sphaeroides).